The chain runs to 720 residues: Transcription factor bHLH155 (720 aa).

Residues 522–534 (YPSSSSDQFQTSL) are compositionally biased toward polar residues. The disordered stretch occupies residues 522-558 (YPSSSSDQFQTSLDIPKKNKKRAKPGESSRPRPRDRQ). A Nuclear localization signal motif is present at residues 540–547 (NKKRAKPG). The 50-residue stretch at 544 to 593 (AKPGESSRPRPRDRQLIQDRIKELRELVPNGSKCSIDSLLERTIKHMLFL) folds into the bHLH domain. The span at 545-558 (KPGESSRPRPRDRQ) shows a compositional bias: basic and acidic residues.

The protein belongs to the bHLH protein family. LHW subfamily. In terms of assembly, homodimer.

Its subcellular location is the nucleus. Transcription factor that may regulate root development. This chain is Transcription factor bHLH155 (BHLH155), found in Arabidopsis thaliana (Mouse-ear cress).